Here is a 258-residue protein sequence, read N- to C-terminus: Methylthioribulose-1-phosphate dehydratase (258 aa).

Residues 1 to 21 (MCSPTTENNNNNNDHLVQSSD) are disordered. Residue Cys105 coordinates substrate. His123 and His125 together coordinate Zn(2+). The Proton donor/acceptor role is filled by Glu153. His210 is a Zn(2+) binding site.

The protein belongs to the aldolase class II family. MtnB subfamily. The cofactor is Zn(2+).

The protein resides in the cytoplasm. The enzyme catalyses 5-(methylsulfanyl)-D-ribulose 1-phosphate = 5-methylsulfanyl-2,3-dioxopentyl phosphate + H2O. The protein operates within amino-acid biosynthesis; L-methionine biosynthesis via salvage pathway; L-methionine from S-methyl-5-thio-alpha-D-ribose 1-phosphate: step 2/6. Functionally, catalyzes the dehydration of methylthioribulose-1-phosphate (MTRu-1-P) into 2,3-diketo-5-methylthiopentyl-1-phosphate (DK-MTP-1-P). The protein is Methylthioribulose-1-phosphate dehydratase of Neurospora crassa (strain ATCC 24698 / 74-OR23-1A / CBS 708.71 / DSM 1257 / FGSC 987).